The sequence spans 694 residues: Putative L-type lectin-domain containing receptor kinase II.2 (694 aa).

A signal peptide spans methionine 1–alanine 24. The Extracellular portion of the chain corresponds to glutamine 25–asparagine 318. Residues arginine 27–lysine 272 form a legume-lectin like region. Residues asparagine 57, asparagine 58, asparagine 73, asparagine 131, asparagine 172, asparagine 183, asparagine 201, asparagine 208, asparagine 240, and asparagine 246 are each glycosylated (N-linked (GlcNAc...) asparagine). The tract at residues serine 283 to lysine 314 is disordered. The span at proline 289–proline 309 shows a compositional bias: pro residues. The chain crosses the membrane as a helical span at residues isoleucine 319–leucine 339. At tyrosine 340–arginine 694 the chain is on the cytoplasmic side. Residues phenylalanine 375–isoleucine 650 enclose the Protein kinase domain. ATP contacts are provided by residues leucine 381–valine 389 and lysine 403. Catalysis depends on aspartate 500, which acts as the Proton acceptor.

The protein in the C-terminal section; belongs to the protein kinase superfamily. Ser/Thr protein kinase family. It in the N-terminal section; belongs to the leguminous lectin family.

The protein resides in the cell membrane. The catalysed reaction is L-seryl-[protein] + ATP = O-phospho-L-seryl-[protein] + ADP + H(+). It carries out the reaction L-threonyl-[protein] + ATP = O-phospho-L-threonyl-[protein] + ADP + H(+). This Arabidopsis thaliana (Mouse-ear cress) protein is Putative L-type lectin-domain containing receptor kinase II.2 (LECRK22).